Reading from the N-terminus, the 138-residue chain is Basic phospholipase A2 homolog MjTX-I (138 aa).

The N-terminal stretch at 1-16 (MRTLWIMAVLLVGVEG) is a signal peptide. V34 lines the suramin pocket. Intrachain disulfides connect C42/C132, C44/C60, C59/C111, C65/C138, C66/C104, C73/C97, and C91/C102. Residue N43 coordinates varespladib. Residues G45 and G48 each coordinate suramin. Varespladib is bound by residues H63 and K64. K85 serves as a coordination point for suramin.

This sequence belongs to the phospholipase A2 family. Group II subfamily. K49 sub-subfamily. In terms of assembly, monomer in solution. Homodimer; non-covalently linked (probable conventional/extended dimer conformation). Homotetramer (dimer of homodimer (probable conventional/extended dimer conformation)); non-covalently linked. Homooligomer. In terms of tissue distribution, expressed by the venom gland.

It is found in the secreted. Its activity is regulated as follows. Myotoxin activity is inhibited by suramin and varespladib. Inhibition by suramin may be caused by (i) distortion of MDiS from both monomers impairing the membrane disruption mechanism by the toxin and (ii) surface electrostatic changes of the complex that interfere with the toxin membrane dockage process (putative-MDoS is partially hidden). Inhibition by varespladib is probably through varespladib binding to MDoS. Snake venom phospholipase A2 homolog that lacks enzymatic activity. In vivo, it displays local myotoxin and edema-inducing activities and is lethal by intraperitoneal injection. The myotoxicity effect is weaker in comparison to other myotoxins, probably due to the formation of high molecular weight complexes and to the oligomeric conformation (conventional dimer). It shows specificity toward neurons and myotubes, but not on a variety of other cell types. This PLA2 excites a cohort of sensory neurons via ATP release and consequent activation of P2RX2 and/or P2RX3 purinergic receptors. Pannexin hemichannels act as downstream mediators of toxin-evoked ATP release. In vivo, it elicits nonneurogenic inflammatory pain, thermal hyperalgesia, and mechanical allodynia, of which the latter is completely dependent on purinergic signaling. The sequence is that of Basic phospholipase A2 homolog MjTX-I from Bothrops moojeni (Lance-headed viper).